Consider the following 462-residue polypeptide: ATP synthase subunit beta (462 aa).

150–157 provides a ligand contact to ATP; sequence GGAGVGKT.

This sequence belongs to the ATPase alpha/beta chains family. As to quaternary structure, F-type ATPases have 2 components, CF(1) - the catalytic core - and CF(0) - the membrane proton channel. CF(1) has five subunits: alpha(3), beta(3), gamma(1), delta(1), epsilon(1). CF(0) has three main subunits: a(1), b(2) and c(9-12). The alpha and beta chains form an alternating ring which encloses part of the gamma chain. CF(1) is attached to CF(0) by a central stalk formed by the gamma and epsilon chains, while a peripheral stalk is formed by the delta and b chains.

Its subcellular location is the cell membrane. The enzyme catalyses ATP + H2O + 4 H(+)(in) = ADP + phosphate + 5 H(+)(out). In terms of biological role, produces ATP from ADP in the presence of a proton gradient across the membrane. The catalytic sites are hosted primarily by the beta subunits. The protein is ATP synthase subunit beta of Wigglesworthia glossinidia brevipalpis.